The primary structure comprises 299 residues: ATP phosphoribosyltransferase (299 aa).

Belongs to the ATP phosphoribosyltransferase family. Long subfamily. Requires Mg(2+) as cofactor.

It is found in the cytoplasm. It carries out the reaction 1-(5-phospho-beta-D-ribosyl)-ATP + diphosphate = 5-phospho-alpha-D-ribose 1-diphosphate + ATP. Its pathway is amino-acid biosynthesis; L-histidine biosynthesis; L-histidine from 5-phospho-alpha-D-ribose 1-diphosphate: step 1/9. With respect to regulation, feedback inhibited by histidine. Its function is as follows. Catalyzes the condensation of ATP and 5-phosphoribose 1-diphosphate to form N'-(5'-phosphoribosyl)-ATP (PR-ATP). Has a crucial role in the pathway because the rate of histidine biosynthesis seems to be controlled primarily by regulation of HisG enzymatic activity. This is ATP phosphoribosyltransferase from Actinobacillus pleuropneumoniae serotype 7 (strain AP76).